Consider the following 220-residue polypeptide: Competence protein ComFC (220 aa).

Belongs to the ComF/GntX family. In terms of assembly, monomer and dimer in solution. Interacts with ComFA and DprA; ComFA-ComFC form rings about 150 Angstroms in diameter with apparent 6-fold symmetry.

Functionally, involved in transformation (genetic competence for DNA uptake). In Streptococcus pneumoniae (strain ATCC BAA-255 / R6), this protein is Competence protein ComFC.